Reading from the N-terminus, the 386-residue chain is uncharacterized protein (386 aa).

The next 9 membrane-spanning stretches (helical) occupy residues 48–68 (NLITLIGLGFVVINILTMLVY), 78–98 (PSWVYASWAIGLFLYQSFDAI), 136–156 (LQLDMFSSILTQFASLLYFYI), 171–191 (YFSGPVEGIVMVIGLFALTAI), 213–233 (FLPYYTYGSCLYNFMAFALLL), 253–273 (VIKALSGILPYFLQWMAVFSL), 285–305 (FLTIFCLNAFIFAYSVGVVIV), 316–336 (WNVLILPFLVDAVDAYTFGVL), and 344–364 (FFCYVGICIGVYGNFVAHVIA).

This sequence belongs to the CDP-alcohol phosphatidyltransferase class-I family.

The protein localises to the membrane. This is an uncharacterized protein from Schizosaccharomyces pombe (strain 972 / ATCC 24843) (Fission yeast).